Reading from the N-terminus, the 70-residue chain is Translation initiation factor IF-1 (70 aa).

The S1-like domain maps to 1–70 (MKETNLSIKG…LTKGRIIYRH (70 aa)).

The protein belongs to the IF-1 family. As to quaternary structure, component of the 30S ribosomal translation pre-initiation complex which assembles on the 30S ribosome in the order IF-2 and IF-3, IF-1 and N-formylmethionyl-tRNA(fMet); mRNA recruitment can occur at any time during PIC assembly.

Its subcellular location is the cytoplasm. One of the essential components for the initiation of protein synthesis. Stabilizes the binding of IF-2 and IF-3 on the 30S subunit to which N-formylmethionyl-tRNA(fMet) subsequently binds. Helps modulate mRNA selection, yielding the 30S pre-initiation complex (PIC). Upon addition of the 50S ribosomal subunit IF-1, IF-2 and IF-3 are released leaving the mature 70S translation initiation complex. The chain is Translation initiation factor IF-1 from Mycoplasmoides gallisepticum (strain R(low / passage 15 / clone 2)) (Mycoplasma gallisepticum).